Reading from the N-terminus, the 156-residue chain is SCP2 sterol-binding domain-containing protein 1 (156 aa).

The region spanning N44 to I156 is the SCP2 domain.

This chain is SCP2 sterol-binding domain-containing protein 1 (Scp2d1), found in Mus musculus (Mouse).